Here is a 554-residue protein sequence, read N- to C-terminus: Arginine--tRNA ligase (554 aa).

Positions 132–142 match the 'HIGH' region motif; sequence ANPTGPIHLGG.

It belongs to the class-I aminoacyl-tRNA synthetase family. As to quaternary structure, monomer.

The protein resides in the cytoplasm. The enzyme catalyses tRNA(Arg) + L-arginine + ATP = L-arginyl-tRNA(Arg) + AMP + diphosphate. This is Arginine--tRNA ligase from Kineococcus radiotolerans (strain ATCC BAA-149 / DSM 14245 / SRS30216).